We begin with the raw amino-acid sequence, 416 residues long: Peptide chain release factor subunit 1 (416 aa).

This sequence belongs to the eukaryotic release factor 1 family. As to quaternary structure, heterodimer of two subunits, one of which binds GTP.

The protein localises to the cytoplasm. Functionally, directs the termination of nascent peptide synthesis (translation) in response to the termination codons UAA, UAG and UGA. This chain is Peptide chain release factor subunit 1, found in Halobacterium salinarum (strain ATCC 29341 / DSM 671 / R1).